We begin with the raw amino-acid sequence, 257 residues long: 3-deoxy-manno-octulosonate cytidylyltransferase (257 aa).

It belongs to the KdsB family.

Its subcellular location is the cytoplasm. The enzyme catalyses 3-deoxy-alpha-D-manno-oct-2-ulosonate + CTP = CMP-3-deoxy-beta-D-manno-octulosonate + diphosphate. It participates in nucleotide-sugar biosynthesis; CMP-3-deoxy-D-manno-octulosonate biosynthesis; CMP-3-deoxy-D-manno-octulosonate from 3-deoxy-D-manno-octulosonate and CTP: step 1/1. The protein operates within bacterial outer membrane biogenesis; lipopolysaccharide biosynthesis. Functionally, activates KDO (a required 8-carbon sugar) for incorporation into bacterial lipopolysaccharide in Gram-negative bacteria. The polypeptide is 3-deoxy-manno-octulosonate cytidylyltransferase (Albidiferax ferrireducens (strain ATCC BAA-621 / DSM 15236 / T118) (Rhodoferax ferrireducens)).